Consider the following 343-residue polypeptide: Uroporphyrinogen decarboxylase (343 aa).

Substrate contacts are provided by residues 23 to 27 (RQAGR), aspartate 73, tyrosine 149, threonine 204, and histidine 320.

The protein belongs to the uroporphyrinogen decarboxylase family. Homodimer.

Its subcellular location is the cytoplasm. It carries out the reaction uroporphyrinogen III + 4 H(+) = coproporphyrinogen III + 4 CO2. It functions in the pathway porphyrin-containing compound metabolism; protoporphyrin-IX biosynthesis; coproporphyrinogen-III from 5-aminolevulinate: step 4/4. Catalyzes the decarboxylation of four acetate groups of uroporphyrinogen-III to yield coproporphyrinogen-III. The polypeptide is Uroporphyrinogen decarboxylase (Bradyrhizobium sp. (strain BTAi1 / ATCC BAA-1182)).